The chain runs to 147 residues: D-aminoacyl-tRNA deacylase (147 aa).

Residues 137–138 (GP) carry the Gly-cisPro motif, important for rejection of L-amino acids motif.

This sequence belongs to the DTD family. As to quaternary structure, homodimer.

Its subcellular location is the cytoplasm. The catalysed reaction is glycyl-tRNA(Ala) + H2O = tRNA(Ala) + glycine + H(+). The enzyme catalyses a D-aminoacyl-tRNA + H2O = a tRNA + a D-alpha-amino acid + H(+). Functionally, an aminoacyl-tRNA editing enzyme that deacylates mischarged D-aminoacyl-tRNAs. Also deacylates mischarged glycyl-tRNA(Ala), protecting cells against glycine mischarging by AlaRS. Acts via tRNA-based rather than protein-based catalysis; rejects L-amino acids rather than detecting D-amino acids in the active site. By recycling D-aminoacyl-tRNA to D-amino acids and free tRNA molecules, this enzyme counteracts the toxicity associated with the formation of D-aminoacyl-tRNA entities in vivo and helps enforce protein L-homochirality. The sequence is that of D-aminoacyl-tRNA deacylase from Acinetobacter baumannii (strain ACICU).